Here is a 382-residue protein sequence, read N- to C-terminus: Pyrimidine monooxygenase RutA (382 aa).

FMN is bound by residues 68–69 (IK), Asn134, Glu143, 159–160 (RY), and Ser209.

The protein belongs to the NtaA/SnaA/DszA monooxygenase family. RutA subfamily.

The catalysed reaction is uracil + FMNH2 + NADH + O2 = (Z)-3-ureidoacrylate + FMN + NAD(+) + H2O + H(+). It carries out the reaction thymine + FMNH2 + NADH + O2 = (Z)-2-methylureidoacrylate + FMN + NAD(+) + H2O + H(+). Catalyzes the pyrimidine ring opening between N-3 and C-4 by an unusual flavin hydroperoxide-catalyzed mechanism, adding oxygen atoms in the process to yield ureidoacrylate peracid, that immediately reacts with FMN forming ureidoacrylate and FMN-N(5)-oxide. The FMN-N(5)-oxide reacts spontaneously with NADH to produce FMN. Requires the flavin reductase RutF to regenerate FMN in vivo. The protein is Pyrimidine monooxygenase RutA of Escherichia coli O55:H7 (strain CB9615 / EPEC).